Consider the following 156-residue polypeptide: Transcription antitermination protein NusB (156 aa).

Belongs to the NusB family.

Involved in transcription antitermination. Required for transcription of ribosomal RNA (rRNA) genes. Binds specifically to the boxA antiterminator sequence of the ribosomal RNA (rrn) operons. In Clostridium kluyveri (strain ATCC 8527 / DSM 555 / NBRC 12016 / NCIMB 10680 / K1), this protein is Transcription antitermination protein NusB.